Here is a 512-residue protein sequence, read N- to C-terminus: MSQAHTPSAPLAEVYDVAVVGGGINGVGIAADAAGRGLSVFLCEQHDLAQHTSSASSKLIHGGLRYLEHYEFRLVREALAEREVLLAKAPHIVKPLRFVLPHRPHLRPAWMIRAGLFLYDHLGKREKLPASRGLRFTGSSPLKAEIRRGFEYSDCAVDDARLVVLNAISAREHGAHVHTRTRCVSARRSKGLWHLHLERSDGSLYSIRARALVNAAGPWVARFIQDDLKQKSPYGIRLIQGSHIIVPKLYEGEHAYILQNEDRRIVFAIPYLDRFTMIGTTDREYQGDPAKVAISEEETAYLLQVVNAHFKQQLAAADILHSFAGVRPLCDDESDEPSAITRDYTLSLSAGNGEPPLLSVFGGKLTTYRKLAESALTQLQPFFANLGPAWTAKAPLPGGEQMQSVEALTEQLANRYAWLDRELALRWARTYGTRVWRLLDGVNGEADLGEHLGGGLYAREVDYLCKHEWAQDAEDILWRRSKLGLFLSPSQQVRLGQYLQSEHPHRPRVHAA.

Residue 16–44 coordinates FAD; that stretch reads DVAVVGGGINGVGIAADAAGRGLSVFLCE.

It belongs to the FAD-dependent glycerol-3-phosphate dehydrogenase family. FAD is required as a cofactor.

The protein resides in the cytoplasm. It catalyses the reaction a quinone + sn-glycerol 3-phosphate = dihydroxyacetone phosphate + a quinol. The protein is Glycerol-3-phosphate dehydrogenase (glpD) of Pseudomonas aeruginosa (strain ATCC 15692 / DSM 22644 / CIP 104116 / JCM 14847 / LMG 12228 / 1C / PRS 101 / PAO1).